A 478-amino-acid polypeptide reads, in one-letter code: CDK5 and ABL1 enzyme substrate 2 (478 aa).

The disordered stretch occupies residues 1-121; sequence MAAAAAGGAP…GLGLDGQRQR (121 aa). Residues 11–24 are compositionally biased toward pro residues; it reads GPAPGPAGPPPPAA. Residues 25-35 are compositionally biased toward low complexity; it reads PTSAARAPPQA. Residues 36–46 are compositionally biased toward basic residues; the sequence is LRRRGDSRRRQ. Residues 69–92 are compositionally biased toward pro residues; sequence EKPPPPPAEAREPPAPPPPEPPTG. A phosphoserine mark is found at S130 and S208. The interval 257–296 is disordered; that stretch reads SDSHGLLPTPRPSVPRTLPGSRHKPAPTKSAPASTELGSD.

It belongs to the cyclin family. Binds to CDK3, CDK5 and ABL1. The C-terminal cyclin-box-like region binds to CDK5.

In terms of biological role, unknown. Probably involved in G1-S cell cycle transition. This chain is CDK5 and ABL1 enzyme substrate 2 (CABLES2), found in Homo sapiens (Human).